The primary structure comprises 318 residues: Pheromone-regulated membrane protein 5 (318 aa).

Residues 78-98 (FIXVGGIAGVIFLAILLWWVI) form a helical membrane-spanning segment. At Ser129 the chain carries Phosphoserine. The segment covering 238–247 (TISSSSASSL) has biased composition (low complexity). The interval 238-318 (TISSSSASSL…HMLEGKEQDE (81 aa)) is disordered. Positions 250-261 (GNEKEVGEDIRK) are enriched in basic and acidic residues. The span at 276–285 (SPESDGSVNR) shows a compositional bias: polar residues. Phosphoserine occurs at positions 279, 282, and 288. Residues 309 to 318 (HMLEGKEQDE) are compositionally biased toward basic and acidic residues. A Glycyl lysine isopeptide (Lys-Gly) (interchain with G-Cter in ubiquitin) cross-link involves residue Lys314.

This sequence belongs to the PRM5 family.

The protein localises to the membrane. This chain is Pheromone-regulated membrane protein 5 (PRM5), found in Saccharomyces cerevisiae (strain FostersO) (Baker's yeast).